A 154-amino-acid chain; its full sequence is Large ribosomal subunit protein uL13 (154 aa).

The protein belongs to the universal ribosomal protein uL13 family. Part of the 50S ribosomal subunit.

Functionally, this protein is one of the early assembly proteins of the 50S ribosomal subunit, although it is not seen to bind rRNA by itself. It is important during the early stages of 50S assembly. This chain is Large ribosomal subunit protein uL13, found in Rhizobium etli (strain ATCC 51251 / DSM 11541 / JCM 21823 / NBRC 15573 / CFN 42).